A 286-amino-acid polypeptide reads, in one-letter code: D-tagatose-1,6-bisphosphate aldolase subunit KbaY (286 aa).

Asp82 acts as the Proton donor in catalysis. Zn(2+)-binding residues include His83 and His180. Gly181 lines the dihydroxyacetone phosphate pocket. Position 208 (His208) interacts with Zn(2+). Dihydroxyacetone phosphate contacts are provided by residues 209–211 (GAS) and 230–233 (NVAT).

Belongs to the class II fructose-bisphosphate aldolase family. TagBP aldolase KbaY subfamily. As to quaternary structure, homotetramer. Forms a complex with KbaZ. Requires Zn(2+) as cofactor.

The catalysed reaction is D-tagatofuranose 1,6-bisphosphate = D-glyceraldehyde 3-phosphate + dihydroxyacetone phosphate. The protein operates within carbohydrate metabolism; D-tagatose 6-phosphate degradation; D-glyceraldehyde 3-phosphate and glycerone phosphate from D-tagatose 6-phosphate: step 2/2. Catalytic subunit of the tagatose-1,6-bisphosphate aldolase KbaYZ, which catalyzes the reversible aldol condensation of dihydroxyacetone phosphate (DHAP or glycerone-phosphate) with glyceraldehyde 3-phosphate (G3P) to produce tagatose 1,6-bisphosphate (TBP). Requires KbaZ subunit for full activity and stability. This is D-tagatose-1,6-bisphosphate aldolase subunit KbaY from Escherichia coli O127:H6 (strain E2348/69 / EPEC).